The primary structure comprises 446 residues: D(1A) dopamine receptor (446 aa).

Residues 1-22 are Extracellular-facing; the sequence is MAPNTSTMDEAGLPAERDFSFR. An N-linked (GlcNAc...) asparagine glycan is attached at Asn4. The chain crosses the membrane as a helical span at residues 23–48; that stretch reads ILTACFLSLLILSTLLGNTLVCAAVI. Residues 49–59 are Cytoplasmic-facing; it reads RFRHLRSKVTN. Residues 60–86 traverse the membrane as a helical segment; it reads FFVISLAVSDLLVAVLVMPWKAVAEIA. Residues 87–95 are Extracellular-facing; it reads GFWPLGPFC. Cys95 and Cys186 are oxidised to a cystine. A helical transmembrane segment spans residues 96 to 118; sequence NIWVAFDIMCSTASILNLCVISV. Topologically, residues 119–137 are cytoplasmic; sequence DRYWAISSPFQYERKMTPK. Residues 138–162 traverse the membrane as a helical segment; it reads AAFILISVAWTLSVLISFIPVQLSW. Topologically, residues 163 to 192 are extracellular; that stretch reads HKAKPTWPLDGNFTSLEDTEDDNCDTRLSR. Residues 193 to 218 form a helical membrane-spanning segment; that stretch reads TYAISSSLISFYIPVAIMIVTYTSIY. Residues 219-272 are Cytoplasmic-facing; the sequence is RIAQKQIRRISALERAAVHAKNCQTTAGNGNPVECAQSESSFKMSFKRETKVLK. A helical membrane pass occupies residues 273–299; the sequence is TLSVIMGVFVCCWLPFFISNCMVPFCG. The Extracellular segment spans residues 300–312; the sequence is SEETQPFCIDSIT. Residues 313-337 traverse the membrane as a helical segment; that stretch reads FDVFVWFGWANSSLNPIIYAFNADF. Topologically, residues 338 to 446 are cytoplasmic; it reads QKAFSTLLGC…PVTHSGQHST (109 aa). Residues Cys347 and Cys351 are each lipidated (S-palmitoyl cysteine).

The protein belongs to the G-protein coupled receptor 1 family. As to quaternary structure, interacts with DNAJC14 via its C-terminus PubMed:11331877. Interacts with DRD2. Interacts with DORIP1. In terms of processing, N-glycosylated. As to expression, brain, in the striatum, the nucleus accumbens, and the olfactory tubercle.

Its subcellular location is the cell membrane. The protein resides in the endoplasmic reticulum membrane. The protein localises to the cell projection. It localises to the dendrite. It is found in the cilium membrane. Its subcellular location is the dendritic spine. In terms of biological role, dopamine receptor whose activity is mediated by G proteins which activate adenylyl cyclase. The polypeptide is D(1A) dopamine receptor (Drd1) (Rattus norvegicus (Rat)).